We begin with the raw amino-acid sequence, 115 residues long: Large ribosomal subunit protein bL19 (115 aa).

Belongs to the bacterial ribosomal protein bL19 family.

Its function is as follows. This protein is located at the 30S-50S ribosomal subunit interface and may play a role in the structure and function of the aminoacyl-tRNA binding site. The sequence is that of Large ribosomal subunit protein bL19 from Desulforapulum autotrophicum (strain ATCC 43914 / DSM 3382 / VKM B-1955 / HRM2) (Desulfobacterium autotrophicum).